Consider the following 710-residue polypeptide: MARTVPLERVRNIGIAAHIDAGKTTTTERILFYSGLVHKLGEVHEGTTVTDWMAQERERGITITAAAITTRWTKRDPKNPSQPLAGAPEYTINIIDTPGHVDFTIEVERSMRVLDGVIAVFDSVGGVQPQSETVWRQANRYNVPRIAFVNKMDRMGANFLKVYNQIRERLKANAVPIQLPIGAEDEFRGIVDLVRLQANIYMDEIGKDIRPAPIPEEMKDLVAEYRAKLVEAVAETDEALMEKYFAEEDLSEADLMAGLRKGTISGQIVPMLCGSAFKNKGVQMLLDAVVDYLPSPIDIPAIKGVLPDGSEVSRKASDDEPFSALAFKLMSDKYGDLTFIRVYSGVLTKGTYVLNSTKNKKERISRLVVLKADERLDVDELRAGDLGAVLGLKDTTTGDTLCDENAPVILESLYIPEPVISVAVEPKTKADIDKLSKALQALAKEDPTFRVSVDPETNQTIISGMGELHLEILVDRMLREFNVEANVGNPQVAYRETIRKPVSRVEGKFIRQTGGRGQYGHVVIDLEPAEPGTGFEFVSKIVGGVIPKEYIPPAEQGIREACESGVLAGYPLIDIRVTLVDGSYHEVDSSEMAFKIAGSMALKEAARRANPVLLEPMMKVEVEVPEAFVGDVIGDINARRGQMEGMSTEGGISKVNAKVPLAEMFGYATDIRSKTQGRGIFTMEFSHYEEVPRSIAEAIIAKSKGSGVTN.

The region spanning 8-297 is the tr-type G domain; that stretch reads ERVRNIGIAA…AVVDYLPSPI (290 aa). Residues 17–24, 96–100, and 150–153 each bind GTP; these read AHIDAGKT, DTPGH, and NKMD.

It belongs to the TRAFAC class translation factor GTPase superfamily. Classic translation factor GTPase family. EF-G/EF-2 subfamily.

It is found in the cytoplasm. Catalyzes the GTP-dependent ribosomal translocation step during translation elongation. During this step, the ribosome changes from the pre-translocational (PRE) to the post-translocational (POST) state as the newly formed A-site-bound peptidyl-tRNA and P-site-bound deacylated tRNA move to the P and E sites, respectively. Catalyzes the coordinated movement of the two tRNA molecules, the mRNA and conformational changes in the ribosome. In Synechococcus sp. (strain JA-3-3Ab) (Cyanobacteria bacterium Yellowstone A-Prime), this protein is Elongation factor G.